Consider the following 575-residue polypeptide: Urease subunit alpha (575 aa).

Residues 137-575 enclose the Urease domain; that stretch reads GGIDCHIHFI…LPMTQRYFLF (439 aa). His-142, His-144, and Lys-225 together coordinate Ni(2+). N6-carboxylysine is present on Lys-225. His-227 lines the substrate pocket. 2 residues coordinate Ni(2+): His-254 and His-280. His-328 functions as the Proton donor in the catalytic mechanism. Asp-368 contributes to the Ni(2+) binding site.

Belongs to the metallo-dependent hydrolases superfamily. Urease alpha subunit family. As to quaternary structure, heterotrimer of UreA (gamma), UreB (beta) and UreC (alpha) subunits. Three heterotrimers associate to form the active enzyme. It depends on Ni cation as a cofactor. Carboxylation allows a single lysine to coordinate two nickel ions.

It is found in the cytoplasm. The catalysed reaction is urea + 2 H2O + H(+) = hydrogencarbonate + 2 NH4(+). It participates in nitrogen metabolism; urea degradation; CO(2) and NH(3) from urea (urease route): step 1/1. The chain is Urease subunit alpha from Methylibium petroleiphilum (strain ATCC BAA-1232 / LMG 22953 / PM1).